The following is a 385-amino-acid chain: Exopolygalacturonase rpg15 (385 aa).

The N-terminal stretch at Met1 to Thr26 is a signal peptide. N-linked (GlcNAc...) asparagine glycans are attached at residues Asn143, Asn161, Asn164, and Asn180. 4 PbH1 repeats span residues Ser165–His195, Ser196–Glu217, Val219–Gly241, and Val249–Thr270. Asp210 serves as the catalytic Proton donor. A disulfide bridge connects residues Cys212 and Cys229. Asn226 is a glycosylation site (N-linked (GlcNAc...) asparagine). Residue His233 is part of the active site. 3 N-linked (GlcNAc...) asparagine glycosylation sites follow: Asn256, Asn319, and Asn343. A disulfide bridge links Cys344 with Cys350. A PbH1 5 repeat occupies Cys350–Gly376. N-linked (GlcNAc...) asparagine glycosylation is present at Asn365.

This sequence belongs to the glycosyl hydrolase 28 family. In terms of processing, N-glycosylated.

It localises to the secreted. It carries out the reaction [(1-&gt;4)-alpha-D-galacturonosyl](n) + H2O = alpha-D-galacturonate + [(1-&gt;4)-alpha-D-galacturonosyl](n-1). In terms of biological role, specific in hydrolyzing the terminal glycosidic bond of polygalacturonic acid and oligogalacturonates. The polypeptide is Exopolygalacturonase rpg15 (Rhizopus delemar (strain RA 99-880 / ATCC MYA-4621 / FGSC 9543 / NRRL 43880) (Mucormycosis agent)).